The following is a 78-amino-acid chain: Acyl carrier protein (78 aa).

A Carrier domain is found at 1–76 (MSLEDDVKLI…DVITYIKTRQ (76 aa)). Serine 36 carries the O-(pantetheine 4'-phosphoryl)serine modification.

It belongs to the acyl carrier protein (ACP) family. In terms of processing, 4'-phosphopantetheine is transferred from CoA to a specific serine of apo-ACP by AcpS. This modification is essential for activity because fatty acids are bound in thioester linkage to the sulfhydryl of the prosthetic group.

It is found in the cytoplasm. Its pathway is lipid metabolism; fatty acid biosynthesis. In terms of biological role, carrier of the growing fatty acid chain in fatty acid biosynthesis. This chain is Acyl carrier protein, found in Chlamydia felis (strain Fe/C-56) (Chlamydophila felis).